Consider the following 430-residue polypeptide: tRNA(Ile)-lysidine synthase (430 aa).

27 to 32 provides a ligand contact to ATP; it reads SGGSDS.

The protein belongs to the tRNA(Ile)-lysidine synthase family.

The protein localises to the cytoplasm. It carries out the reaction cytidine(34) in tRNA(Ile2) + L-lysine + ATP = lysidine(34) in tRNA(Ile2) + AMP + diphosphate + H(+). Ligates lysine onto the cytidine present at position 34 of the AUA codon-specific tRNA(Ile) that contains the anticodon CAU, in an ATP-dependent manner. Cytidine is converted to lysidine, thus changing the amino acid specificity of the tRNA from methionine to isoleucine. The polypeptide is tRNA(Ile)-lysidine synthase (Rickettsia akari (strain Hartford)).